A 106-amino-acid chain; its full sequence is Malonate decarboxylase acyl carrier protein (106 aa).

At Ser28 the chain carries O-(phosphoribosyl dephospho-coenzyme A)serine.

This sequence belongs to the MdcC family. In terms of processing, covalently binds the prosthetic group of malonate decarboxylase.

The protein localises to the cytoplasm. In terms of biological role, subunit of malonate decarboxylase, it is an acyl carrier protein to which acetyl and malonyl thioester residues are bound via a 2'-(5''-phosphoribosyl)-3'-dephospho-CoA prosthetic group and turn over during the catalytic mechanism. This Stenotrophomonas maltophilia (strain R551-3) protein is Malonate decarboxylase acyl carrier protein.